Consider the following 263-residue polypeptide: Type III pantothenate kinase (263 aa).

Position 6-13 (6-13 (DVGNTRIK)) interacts with ATP. Substrate is bound by residues Y92 and 99–102 (GTDR). D101 (proton acceptor) is an active-site residue. T124 contributes to the ATP binding site. T174 provides a ligand contact to substrate.

It belongs to the type III pantothenate kinase family. In terms of assembly, homodimer. It depends on NH4(+) as a cofactor. The cofactor is K(+).

The protein resides in the cytoplasm. The catalysed reaction is (R)-pantothenate + ATP = (R)-4'-phosphopantothenate + ADP + H(+). It participates in cofactor biosynthesis; coenzyme A biosynthesis; CoA from (R)-pantothenate: step 1/5. Catalyzes the phosphorylation of pantothenate (Pan), the first step in CoA biosynthesis. This Azoarcus sp. (strain BH72) protein is Type III pantothenate kinase.